The primary structure comprises 338 residues: MELPILPTSVIGSYPKPRWLLRMYRLRDLGKIPEEDFKEAVKDASVSVLREHERAGVDIPWDGEMWRTEMTEHFTAKIGGFKFYGPVRVWGNAYFNKAAAVDKLEYKEPLVLEEFLWVKKNTTREVVKIPITGPYTIAEWSFNEYYPDKESFIMDLAKIINKELKMLENHGALYIQLDEPAMLNHPDEVPLAVEAINKAVKGIKIKVGLHVCYSNYYLLADYFDEIRVTQFALEFANRQFRDMDFLKKLSNKELGFGVVDVHNPRIESVEEIVKAIKKVFEYVEPELLYINPDCGMKLLDRNIAYNKLVNMVKATELVRKELEREGKKTTEFRTLKDI.

Residues histidine 210, cysteine 212, glutamate 234, and cysteine 294 each coordinate Zn(2+).

Belongs to the archaeal MetE family. Zn(2+) serves as cofactor.

It functions in the pathway amino-acid biosynthesis; L-methionine biosynthesis via de novo pathway. Catalyzes the transfer of a methyl group to L-homocysteine resulting in methionine formation. The physiological methyl donor is unknown. This is Methionine synthase from Pyrococcus horikoshii (strain ATCC 700860 / DSM 12428 / JCM 9974 / NBRC 100139 / OT-3).